Reading from the N-terminus, the 283-residue chain is Phosphatidylglycerol--prolipoprotein diacylglyceryl transferase (283 aa).

4 consecutive transmembrane segments (helical) span residues 17–37 (LAVR…TFLG), 56–76 (FLTW…VLFY), 92–112 (WEGG…IWLF), and 117–137 (GIGF…GLAS). Arg139 serves as a coordination point for a 1,2-diacyl-sn-glycero-3-phospho-(1'-sn-glycerol). Transmembrane regions (helical) follow at residues 194-214 (PSQL…VWLF), 222-242 (GQVA…AEFA), and 255-275 (GLSM…VGFV).

This sequence belongs to the Lgt family.

It is found in the cell inner membrane. It carries out the reaction L-cysteinyl-[prolipoprotein] + a 1,2-diacyl-sn-glycero-3-phospho-(1'-sn-glycerol) = an S-1,2-diacyl-sn-glyceryl-L-cysteinyl-[prolipoprotein] + sn-glycerol 1-phosphate + H(+). Its pathway is protein modification; lipoprotein biosynthesis (diacylglyceryl transfer). Its function is as follows. Catalyzes the transfer of the diacylglyceryl group from phosphatidylglycerol to the sulfhydryl group of the N-terminal cysteine of a prolipoprotein, the first step in the formation of mature lipoproteins. This is Phosphatidylglycerol--prolipoprotein diacylglyceryl transferase from Neisseria meningitidis serogroup C / serotype 2a (strain ATCC 700532 / DSM 15464 / FAM18).